Reading from the N-terminus, the 426-residue chain is Serine--tRNA ligase (426 aa).

233–235 is an L-serine binding site; that stretch reads TAE. 264–266 lines the ATP pocket; that stretch reads RRE. L-serine is bound at residue Glu287. 351 to 354 is an ATP binding site; that stretch reads EISS. Ser386 lines the L-serine pocket.

Belongs to the class-II aminoacyl-tRNA synthetase family. Type-1 seryl-tRNA synthetase subfamily. As to quaternary structure, homodimer. The tRNA molecule binds across the dimer.

It is found in the cytoplasm. The catalysed reaction is tRNA(Ser) + L-serine + ATP = L-seryl-tRNA(Ser) + AMP + diphosphate + H(+). The enzyme catalyses tRNA(Sec) + L-serine + ATP = L-seryl-tRNA(Sec) + AMP + diphosphate + H(+). It participates in aminoacyl-tRNA biosynthesis; selenocysteinyl-tRNA(Sec) biosynthesis; L-seryl-tRNA(Sec) from L-serine and tRNA(Sec): step 1/1. Functionally, catalyzes the attachment of serine to tRNA(Ser). Is also able to aminoacylate tRNA(Sec) with serine, to form the misacylated tRNA L-seryl-tRNA(Sec), which will be further converted into selenocysteinyl-tRNA(Sec). In Prochlorococcus marinus (strain NATL2A), this protein is Serine--tRNA ligase.